The following is a 115-amino-acid chain: Immunoglobulin kappa variable 5-2 (115 aa).

An N-terminal signal peptide occupies residues 1–20 (MGSQVHLLSFLLLWISDTRA). Positions 21-43 (ETTLTQSPAFMSATPGDKVNISC) are framework-1. Residues 22 to 115 (TTLTQSPAFM…YFCLQHDNFP (94 aa)) enclose the Ig-like domain. Asparagine 40 is a glycosylation site (N-linked (GlcNAc...) asparagine). Serine 42 carries the phosphoserine modification. A disulfide bridge connects residues cysteine 43 and cysteine 108. Residues 44 to 54 (KASQDIDDDMN) are complementarity-determining-1. Residues 55–69 (WYQQKPGEAAIFIIQ) form a framework-2 region. Residues 70–76 (EATTLVP) are complementarity-determining-2. Positions 77–108 (GIPPRFSGSGYGTDFTLTINNIESEDAAYYFC) are framework-3. The segment at 109–115 (LQHDNFP) is complementarity-determining-3.

Immunoglobulins are composed of two identical heavy chains and two identical light chains; disulfide-linked.

It is found in the secreted. The protein resides in the cell membrane. V region of the variable domain of immunoglobulin light chains that participates in the antigen recognition. Immunoglobulins, also known as antibodies, are membrane-bound or secreted glycoproteins produced by B lymphocytes. In the recognition phase of humoral immunity, the membrane-bound immunoglobulins serve as receptors which, upon binding of a specific antigen, trigger the clonal expansion and differentiation of B lymphocytes into immunoglobulins-secreting plasma cells. Secreted immunoglobulins mediate the effector phase of humoral immunity, which results in the elimination of bound antigens. The antigen binding site is formed by the variable domain of one heavy chain, together with that of its associated light chain. Thus, each immunoglobulin has two antigen binding sites with remarkable affinity for a particular antigen. The variable domains are assembled by a process called V-(D)-J rearrangement and can then be subjected to somatic hypermutations which, after exposure to antigen and selection, allow affinity maturation for a particular antigen. In Homo sapiens (Human), this protein is Immunoglobulin kappa variable 5-2.